The chain runs to 232 residues: MLPNGKPDPASLSDRQRRILEVIRDAVVLRGYPPSIREIGDAAGLQSTSSVAYQLKELEKKGFLRRDPNKPRAVDVRHLPETDNRTKAGPKAKARPTAGASPQPELASSTSFIPVVGKIAAGSPILAEQNIEEYYPLPADIVGDGELYMLQVVGESMRDAGILDGDWVVVRSQPVAEQGEFVAAMIEGEATVKEFHKDASGIWLLPHNDSFAPIPAENAEIMGKVVSVMRKL.

The segment at residues 36–56 (IREIGDAAGLQSTSSVAYQLK) is a DNA-binding region (H-T-H motif). Residues 62 to 86 (GFLRRDPNKPRAVDVRHLPETDNRT) are compositionally biased toward basic and acidic residues. The segment at 62 to 107 (GFLRRDPNKPRAVDVRHLPETDNRTKAGPKAKARPTAGASPQPELA) is disordered. Residues Ser-156 and Lys-193 each act as for autocatalytic cleavage activity in the active site.

It belongs to the peptidase S24 family. In terms of assembly, homodimer.

The enzyme catalyses Hydrolysis of Ala-|-Gly bond in repressor LexA.. Its function is as follows. Represses a number of genes involved in the response to DNA damage (SOS response), including recA and lexA. In the presence of single-stranded DNA, RecA interacts with LexA causing an autocatalytic cleavage which disrupts the DNA-binding part of LexA, leading to derepression of the SOS regulon and eventually DNA repair. The chain is LexA repressor from Corynebacterium efficiens (strain DSM 44549 / YS-314 / AJ 12310 / JCM 11189 / NBRC 100395).